The primary structure comprises 1309 residues: Disease resistance protein RPP2A (1309 aa).

The 165-residue stretch at 9 to 173 (RRYDVFPSFS…MVADDVSKKL (165 aa)) folds into the TIR 1 domain. The active site involves glutamate 84. An NB-ARC 1 domain is found at 187-418 (EAHLEAMSSI…FKKTLRNYLP (232 aa)). One can recognise an ALOG domain in the interval 488-585 (PNRRHSNDDW…KECILVFSCH (98 aa)). Residues 574-737 (REKECILVFS…EVVRNASLRL (164 aa)) enclose the TIR 2 domain. One can recognise an NB-ARC 2 domain in the interval 755–987 (SQSTDVEIMG…IFLDLACFFR (233 aa)). The stretch at 1114-1141 (LPHGLDTLPDELSLLHWENYPLVYLPQK) forms a coiled coil. LRR repeat units follow at residues 1145 to 1167 (VNLV…KKNL), 1168 to 1195 (EKLK…NLEH), 1214 to 1237 (CGKL…MVDL), 1238 to 1258 (TTLK…QDFA), 1259 to 1283 (PNLE…NLTE), and 1285 to 1307 (VTLD…EIIR).

It belongs to the disease resistance TIR-NB-LRR family.

It catalyses the reaction NAD(+) + H2O = ADP-D-ribose + nicotinamide + H(+). Functionally, disease resistance protein that cooperates with RPP2B to confer resistance to Hyaloperonospora parasitica isolate Cala2. This is Disease resistance protein RPP2A from Arabidopsis thaliana (Mouse-ear cress).